The following is a 297-amino-acid chain: MATLLSARRASWRDYLELTKPKVVVLMLITSLAGMFLATRAGVSWSVLLFGNLGIGLCAGGAAVVNHVVDRRIDALMARTHKRPLAQGRVEPLPALLFALALALLGMALLLAFTNALTAWLTLASLLGYAVLYTGFLKRATPQNIVIGGLAGAAPPLLGWVAVSGHVSAEPLLLVLIIFAWTPPHFWALAIHRKEEYAKADIPMLPVTHGERYTKLHILLYTLILLAVSLLPYAIHMSGPLYLACALVLGLRFLQWAWVLYRGSRPHAAIGTFKYSIAYLFALFIALLLDHYLLLNL.

Transmembrane regions (helical) follow at residues 23–43, 45–65, 93–113, 117–137, 145–165, 171–191, 216–236, 241–261, and 277–297; these read VVVL…RAGV, WSVL…AAVV, LPAL…LLAF, LTAW…TGFL, IVIG…AVSG, PLLL…ALAI, LHIL…YAIH, LYLA…WVLY, and IAYL…LLNL.

Belongs to the UbiA prenyltransferase family. Protoheme IX farnesyltransferase subfamily.

It localises to the cell inner membrane. The enzyme catalyses heme b + (2E,6E)-farnesyl diphosphate + H2O = Fe(II)-heme o + diphosphate. It functions in the pathway porphyrin-containing compound metabolism; heme O biosynthesis; heme O from protoheme: step 1/1. Its function is as follows. Converts heme B (protoheme IX) to heme O by substitution of the vinyl group on carbon 2 of heme B porphyrin ring with a hydroxyethyl farnesyl side group. In Pseudomonas putida (strain GB-1), this protein is Protoheme IX farnesyltransferase 1.